A 317-amino-acid polypeptide reads, in one-letter code: Putative carboxypeptidase RP402 (317 aa).

Ser-125 serves as the catalytic Nucleophile. Catalysis depends on charge relay system residues Glu-225 and His-288.

The protein belongs to the peptidase S66 family.

This is Putative carboxypeptidase RP402 from Rickettsia prowazekii (strain Madrid E).